A 1907-amino-acid chain; its full sequence is Receptor-type tyrosine-protein phosphatase F (1907 aa).

A signal peptide spans 1-29 (MAPEPAPGRTMVPLVPALVMLGLVAGAHG). The Extracellular segment spans residues 30-1263 (DSKPVFIKVP…QQQEEPEMLW (1234 aa)). Ig-like C2-type domains lie at 33–123 (PVFI…AKLS), 135–224 (PSID…ANLY), and 232–314 (PRFS…AQVT). A disulfide bond links Cys54 and Cys107. 68–77 (KKGKKVSSQR) contacts heparin. An N-linked (GlcNAc...) asparagine glycan is attached at Asn117. An intrachain disulfide couples Cys156 to Cys207. N-linked (GlcNAc...) asparagine glycans are attached at residues Asn250 and Asn295. Cys253 and Cys298 form a disulfide bridge. 8 consecutive Fibronectin type-III domains span residues 321–411 (PPID…TGEQ), 416–510 (PPRR…TQQG), 514–604 (QPAD…TAQS), 609–706 (PPQK…TDED), 711–819 (PPRK…TTGA), 820–914 (VPGR…PEDL), 918–1010 (FPQN…TMPV), and 1014–1098 (FAKN…TAPD). Residues 398–417 (GPPSEAVRARTGEQAPSSPP) form a disordered region. The segment at 693–712 (GPESSPVLVRTDEDVPSGPP) is disordered. Asn721 carries N-linked (GlcNAc...) asparagine glycosylation. Asn966 carries an N-linked (GlcNAc...) asparagine glycan. The helical transmembrane segment at 1264–1284 (VTGPVLAVILIILIVIAILLF) threads the bilayer. Over 1285–1907 (KRKRTHSPSS…YLGSFDHYAT (623 aa)) the chain is Cytoplasmic. Ser1305 carries the phosphoserine modification. 2 consecutive Tyrosine-protein phosphatase domains span residues 1352–1607 (FSQE…LLEA) and 1639–1898 (MELE…ALEY). Residues Asp1516, 1548 to 1554 (CSAGVGR), and Gln1592 contribute to the substrate site. Cys1548 acts as the Phosphocysteine intermediate in catalysis. Catalysis depends on Cys1839, which acts as the Phosphocysteine intermediate.

This sequence belongs to the protein-tyrosine phosphatase family. Receptor class 2A subfamily. As to quaternary structure, interacts with GRIP1. Interacts with PPFIA1, PPFIA2 and PPFIA3. Interacts with INSR.

It localises to the membrane. It catalyses the reaction O-phospho-L-tyrosyl-[protein] + H2O = L-tyrosyl-[protein] + phosphate. Its function is as follows. Possible cell adhesion receptor. It possesses an intrinsic protein tyrosine phosphatase activity (PTPase) and dephosphorylates EPHA2 regulating its activity. Functionally, the first PTPase domain has enzymatic activity, while the second one seems to affect the substrate specificity of the first one. The protein is Receptor-type tyrosine-protein phosphatase F (PTPRF) of Homo sapiens (Human).